A 130-amino-acid polypeptide reads, in one-letter code: Small ribosomal subunit protein uS8 (130 aa).

This sequence belongs to the universal ribosomal protein uS8 family. In terms of assembly, part of the 30S ribosomal subunit.

One of the primary rRNA binding proteins, it binds directly to 16S rRNA central domain where it helps coordinate assembly of the platform of the 30S subunit. This is Small ribosomal subunit protein uS8 from Methanocella arvoryzae (strain DSM 22066 / NBRC 105507 / MRE50).